A 154-amino-acid polypeptide reads, in one-letter code: Large-conductance mechanosensitive channel (154 aa).

Transmembrane regions (helical) follow at residues 14-34 (VVDL…VNSL) and 86-106 (VFIN…FFVV).

Belongs to the MscL family. As to quaternary structure, homopentamer.

It localises to the cell membrane. Channel that opens in response to stretch forces in the membrane lipid bilayer. May participate in the regulation of osmotic pressure changes within the cell. The protein is Large-conductance mechanosensitive channel of Dehalococcoides mccartyi (strain CBDB1).